Reading from the N-terminus, the 182-residue chain is Large ribosomal subunit protein uL6 (182 aa).

This sequence belongs to the universal ribosomal protein uL6 family. In terms of assembly, part of the 50S ribosomal subunit.

This protein binds to the 23S rRNA, and is important in its secondary structure. It is located near the subunit interface in the base of the L7/L12 stalk, and near the tRNA binding site of the peptidyltransferase center. The protein is Large ribosomal subunit protein uL6 of Haloquadratum walsbyi (strain DSM 16790 / HBSQ001).